We begin with the raw amino-acid sequence, 128 residues long: 3-aminoacrylate deaminase RutC (128 aa).

Belongs to the RutC family. In terms of assembly, homotrimer.

It catalyses the reaction (Z)-3-aminoacrylate + H2O + H(+) = 3-oxopropanoate + NH4(+). Functionally, involved in pyrimidine catabolism. Catalyzes the deamination of 3-aminoacrylate to malonic semialdehyde, a reaction that can also occur spontaneously. RutC may facilitate the reaction and modulate the metabolic fitness, rather than catalyzing essential functions. The polypeptide is 3-aminoacrylate deaminase RutC (Escherichia coli O103:H2 (strain 12009 / EHEC)).